Reading from the N-terminus, the 349-residue chain is Isopentenyl-diphosphate delta-isomerase (349 aa).

9–10 (RK) is a binding site for substrate. Residues 65–67 (AMT), Ser95, and Asn124 each bind FMN. Residue 95 to 97 (STH) coordinates substrate. Gln154 serves as a coordination point for substrate. A Mg(2+)-binding site is contributed by Glu155. Residues Lys186, Ser211, Thr216, 262–264 (GLR), and 283–284 (SR) each bind FMN.

It belongs to the IPP isomerase type 2 family. Homooctamer. Dimer of tetramers. FMN is required as a cofactor. The cofactor is NADPH. Requires Mg(2+) as cofactor.

The protein localises to the cytoplasm. It carries out the reaction isopentenyl diphosphate = dimethylallyl diphosphate. Involved in the biosynthesis of isoprenoids. Catalyzes the 1,3-allylic rearrangement of the homoallylic substrate isopentenyl (IPP) to its allylic isomer, dimethylallyl diphosphate (DMAPP). This Staphylococcus aureus (strain N315) protein is Isopentenyl-diphosphate delta-isomerase.